The following is a 322-amino-acid chain: MPGTLDHFRADEYSPYHFFSSEEWAKFRADTPLTLSADEVKRLRSLDDPIDLDEVRRIYLSLSRLLSSHVEASQLLFEQRNRFLNMGDVNKTPFVIGIAGSVAVGKSTTARILKELLARWPSSPKVDLITTDGFLYPNEVLRRENLMERKGFPESYDIGALLRFLSAIKAGQPNVKAPRYSHLTYDVLPNEFTVIDQPDILIFEGINVLQSRDLPAGGRIVPIVSDFFDFSIYIDADEDFIHNWYVNRFMNLRQTAFRDPNSFFNRYASISEEAALSIAEGLWQNINLKNLRQNIVPTRPRADLILRKGENHLIDTVALRKL.

100-107 (GSVAVGKS) contacts ATP.

The protein belongs to the prokaryotic pantothenate kinase family.

Its subcellular location is the cytoplasm. The catalysed reaction is (R)-pantothenate + ATP = (R)-4'-phosphopantothenate + ADP + H(+). Its pathway is cofactor biosynthesis; coenzyme A biosynthesis; CoA from (R)-pantothenate: step 1/5. The polypeptide is Pantothenate kinase (Agrobacterium fabrum (strain C58 / ATCC 33970) (Agrobacterium tumefaciens (strain C58))).